Reading from the N-terminus, the 548-residue chain is Leucine-rich repeat LGI family member 3 (548 aa).

Residues 1–30 form the signal peptide; it reads MAGLRARRGPAPGLLALSALGFCLMLQVSA. The 34-residue stretch at 31–64 folds into the LRRNT domain; sequence KRLPKTPPCPPSCSCTRDTAFCVDSKAVPRNLPS. LRR repeat units follow at residues 89–110, 113–134, and 137–158; these read LLQF…AFTG, HLQY…TFRG, and SLTH…IFRP. One can recognise an LRRCT domain in the interval 170–220; it reads NSLNCDCKVKWLVEWLAHTNTTVAPIYCASPPRFQEHKVQDLPLREFDCIT. Residue Asn-189 is glycosylated (N-linked (GlcNAc...) asparagine). 2 EAR repeats span residues 222 to 264 and 268 to 310; these read DFVL…KWDY and QLRD…HWDP. Asn-311 is a glycosylation site (N-linked (GlcNAc...) asparagine). EAR repeat units lie at residues 314–361, 363–406, 410–453, 455–497, and 501–543; these read RFTK…RWHQ, GFYS…QWSR, QFVA…RWEG, RFSE…QWDE, and KFVR…RHVV. N-linked (GlcNAc...) asparagine glycosylation occurs at Asn-394.

As to quaternary structure, interacts with STX1A.

It is found in the secreted. It localises to the cytoplasmic vesicle. Its subcellular location is the secretory vesicle. The protein localises to the synaptic vesicle. The protein resides in the synapse. It is found in the synaptosome. May participate in the regulation of neuronal exocytosis. This is Leucine-rich repeat LGI family member 3 (LGI3) from Macaca fascicularis (Crab-eating macaque).